The sequence spans 399 residues: Lipoyl synthase, mitochondrial (399 aa).

The N-terminal 14 residues, 1 to 14 (MALISRSCGAASRY), are a transit peptide targeting the mitochondrion. Residues 39 to 52 (AASTSSSSSPSPST) are compositionally biased toward low complexity. The tract at residues 39 to 60 (AASTSSSSSPSPSTHNDRKKDL) is disordered. [4Fe-4S] cluster contacts are provided by cysteine 128, cysteine 133, cysteine 139, cysteine 159, cysteine 163, cysteine 166, and serine 374. In terms of domain architecture, Radical SAM core spans 144 to 363 (EYATATATIM…EKVGQEMGFI (220 aa)).

Belongs to the radical SAM superfamily. Lipoyl synthase family. It depends on [4Fe-4S] cluster as a cofactor.

It localises to the mitochondrion. The enzyme catalyses [[Fe-S] cluster scaffold protein carrying a second [4Fe-4S](2+) cluster] + N(6)-octanoyl-L-lysyl-[protein] + 2 oxidized [2Fe-2S]-[ferredoxin] + 2 S-adenosyl-L-methionine + 4 H(+) = [[Fe-S] cluster scaffold protein] + N(6)-[(R)-dihydrolipoyl]-L-lysyl-[protein] + 4 Fe(3+) + 2 hydrogen sulfide + 2 5'-deoxyadenosine + 2 L-methionine + 2 reduced [2Fe-2S]-[ferredoxin]. It participates in protein modification; protein lipoylation via endogenous pathway; protein N(6)-(lipoyl)lysine from octanoyl-[acyl-carrier-protein]: step 2/2. Catalyzes the radical-mediated insertion of two sulfur atoms into the C-6 and C-8 positions of the octanoyl moiety bound to the lipoyl domains of lipoate-dependent enzymes, thereby converting the octanoylated domains into lipoylated derivatives. This Danio rerio (Zebrafish) protein is Lipoyl synthase, mitochondrial (lias).